The primary structure comprises 491 residues: Pre-glycoprotein polyprotein GP complex (491 aa).

Gly2 is lipidated: N-myristoyl glycine; by host. Residues 2–17 lie on the Extracellular side of the membrane; that stretch reads GQIVTFFQEVPHVIEE. The helical transmembrane segment at 18–33 threads the bilayer; that stretch reads VMNIVLIALSVLAVLK. The Cytoplasmic segment spans residues 34–58; the sequence is GLYNFATCGLVGLVTFLLLCGRSCT. Zn(2+) is bound at residue Cys57. At 59-432 the chain is on the extracellular side; sequence TSLYKGVYEL…QGKTPLGLVD (374 aa). Asn79, Asn89, Asn99, Asn109, Asn119, and Asn167 each carry an N-linked (GlcNAc...) asparagine; by host glycan. Cystine bridges form between Cys86–Cys231, Cys118–Cys155, Cys180–Cys212, Cys279–Cys292, Cys301–Cys310, and Cys364–Cys385. Asn224 carries an N-linked (GlcNAc...) asparagine; by host glycan. N-linked (GlcNAc...) asparagine; by host glycosylation is found at Asn365, Asn373, Asn390, and Asn395. Residues 433–453 form a helical membrane-spanning segment; sequence LFVFSTSFYLISIFLHLVKIP. The Cytoplasmic portion of the chain corresponds to 454-491; sequence THRHIVGKSCPKPHRLNHMGICSCGLYKQPGVPVKWKR. Residues His455, His457, Cys463, His467, Cys475, and Cys477 each contribute to the Zn(2+) site.

This sequence belongs to the arenaviridae GPC protein family. Interacts with glycoprotein G2. Part of the GP complex (GP-C) together with glycoprotein G1 and glycoprotein G2. The GP-complex interacts with protein Z, which interacts with ribonucleocapsid; these interactions may induce virion budding. In terms of assembly, homotrimer; disulfide-linked. In pre-fusion state, G1 homotrimers bind G2 homotrimers via ionic interactions. Part of the GP complex (GP-C) together with glycoprotein G2 and the stable signal peptide. Interacts with the primary host receptor DAG1 on the cell surface; this interaction occurs at pH 8.0 but not at pH 6.0 and below. Upon virus internalization and at endosomal pH, interacts with the host lysosomal protein LAMP1; this interaction mediates G1 dissociation from GP-C and membrane fusion. The GP-complex interacts with protein Z, which interacts with ribonucleocapsid; these interactions may induce virion budding. As to quaternary structure, homotrimer. Interacts with the stable signal peptide. In pre-fusion state, G2 homotrimers bind G1 homotrimers via ionic interactions. Part of the GP complex (GP-C) together with glycoprotein G1 and the stable signal peptide. Acidification in the endosome triggers rearrangements, which ultimately leads to a 6 helix bundle formed by the two heptad repeat domains (HR1 and HR2) in post-fusion state. The GP-complex interacts with protein Z, which interacts with ribonucleocapsid; these interactions may induce virion budding. Specific enzymatic cleavages in vivo yield mature proteins. GP-C polyprotein is cleaved in the endoplasmic reticulum by the host protease MBTPS1. Only cleaved glycoprotein is incorporated into virions. Post-translationally, the SSP remains stably associated with the GP complex following cleavage by signal peptidase and plays crucial roles in the trafficking of GP through the secretory pathway. In terms of processing, myristoylation is necessary for GP2-mediated fusion activity.

The protein resides in the virion membrane. Its subcellular location is the host endoplasmic reticulum membrane. The protein localises to the host Golgi apparatus membrane. It localises to the host cell membrane. In terms of biological role, functions as a cleaved signal peptide that is retained as the third component of the GP complex (GP-C). Helps to stabilize the spike complex in its native conformation. The SSP is required for efficient glycoprotein expression, post-translational maturation cleavage of G1 and G2, glycoprotein transport to the cell surface plasma membrane, formation of infectious virus particles, and acid pH-dependent glycoprotein-mediated cell fusion. Forms the virion spikes together with glycoprotein G2. The glycoprotein spike trimers are connected to the underlying matrix. Interacts with the host receptor. Mediates virus attachment to the host primary receptor alpha-dystroglycan DAG1 (alpha-DG) at the cell surface. This attachment induces virion internalization apparently through macropinocytosis. Following endocytosis, there is a pH-dependent switch from binding DAG1 to the host lysosomal receptor LAMP1. This latter binding triggers the dissociation of GP1, exposing the fusion subunit, GP2, such that fusion can occur. Down-modulates host DAG1. Its function is as follows. Forms the virion spikes together with glycoprotein G1. The glycoprotein spike trimers are connected to the underlying matrix. Class I viral fusion protein that directs fusion of viral and host endosomal membranes, leading to delivery of the nucleocapsid into the cytoplasm. Membrane fusion is mediated by irreversible conformational changes induced by acidification. In Homo sapiens (Human), this protein is Pre-glycoprotein polyprotein GP complex.